The chain runs to 170 residues: Large ribosomal subunit protein bL17 (170 aa).

It belongs to the bacterial ribosomal protein bL17 family. As to quaternary structure, part of the 50S ribosomal subunit. Contacts protein L32.

In Azobacteroides pseudotrichonymphae genomovar. CFP2, this protein is Large ribosomal subunit protein bL17.